A 291-amino-acid polypeptide reads, in one-letter code: Shikimate dehydrogenase (NADP(+)) (291 aa).

Residues Ser26 to Ser28 and Ser73 each bind shikimate. Lys77 (proton acceptor) is an active-site residue. 2 residues coordinate shikimate: Asn98 and Asp113. NADP(+) is bound by residues Gly137–Ala141 and Val238. Tyr240 serves as a coordination point for shikimate. Position 261 (Gly261) interacts with NADP(+).

This sequence belongs to the shikimate dehydrogenase family. Homodimer.

The enzyme catalyses shikimate + NADP(+) = 3-dehydroshikimate + NADPH + H(+). It functions in the pathway metabolic intermediate biosynthesis; chorismate biosynthesis; chorismate from D-erythrose 4-phosphate and phosphoenolpyruvate: step 4/7. Its function is as follows. Involved in the biosynthesis of the chorismate, which leads to the biosynthesis of aromatic amino acids. Catalyzes the reversible NADPH linked reduction of 3-dehydroshikimate (DHSA) to yield shikimate (SA). This is Shikimate dehydrogenase (NADP(+)) from Listeria innocua serovar 6a (strain ATCC BAA-680 / CLIP 11262).